Here is a 364-residue protein sequence, read N- to C-terminus: Methylenetetrahydrofolate--tRNA-(uracil-5-)-methyltransferase TrmFO (364 aa).

11-16 is an FAD binding site; that stretch reads GAGLAG. Polar residues predominate over residues 335–352; it reads SYLNQPCSSANDPTSSLL. Residues 335–364 are disordered; sequence SYLNQPCSSANDPTSSLLDRSPAQRDIPLQ.

The protein belongs to the MnmG family. TrmFO subfamily. It depends on FAD as a cofactor.

The protein resides in the cytoplasm. It carries out the reaction uridine(54) in tRNA + (6R)-5,10-methylene-5,6,7,8-tetrahydrofolate + NADH + H(+) = 5-methyluridine(54) in tRNA + (6S)-5,6,7,8-tetrahydrofolate + NAD(+). It catalyses the reaction uridine(54) in tRNA + (6R)-5,10-methylene-5,6,7,8-tetrahydrofolate + NADPH + H(+) = 5-methyluridine(54) in tRNA + (6S)-5,6,7,8-tetrahydrofolate + NADP(+). Its function is as follows. Catalyzes the folate-dependent formation of 5-methyl-uridine at position 54 (M-5-U54) in all tRNAs. The sequence is that of Methylenetetrahydrofolate--tRNA-(uracil-5-)-methyltransferase TrmFO from Prochlorococcus marinus (strain MIT 9313).